The following is a 284-amino-acid chain: Diaminopimelate epimerase (284 aa).

Substrate-binding residues include Asn-20, Gln-53, and Asn-73. The Proton donor role is filled by Cys-82. Substrate-binding positions include 83–84 (GN), Asn-167, Asn-200, and 218–219 (ER). The Proton acceptor role is filled by Cys-227. Substrate is bound at residue 228-229 (GS).

The protein belongs to the diaminopimelate epimerase family. As to quaternary structure, homodimer.

The protein localises to the cytoplasm. It carries out the reaction (2S,6S)-2,6-diaminopimelate = meso-2,6-diaminopimelate. Its pathway is amino-acid biosynthesis; L-lysine biosynthesis via DAP pathway; DL-2,6-diaminopimelate from LL-2,6-diaminopimelate: step 1/1. Catalyzes the stereoinversion of LL-2,6-diaminopimelate (L,L-DAP) to meso-diaminopimelate (meso-DAP), a precursor of L-lysine and an essential component of the bacterial peptidoglycan. In Xylella fastidiosa (strain M12), this protein is Diaminopimelate epimerase.